Reading from the N-terminus, the 214-residue chain is DNA-directed RNA polymerase subunit alpha (214 aa).

The protein belongs to the RNA polymerase alpha chain family. As to quaternary structure, in plastids the minimal PEP RNA polymerase catalytic core is composed of four subunits: alpha, beta, beta', and beta''. When a (nuclear-encoded) sigma factor is associated with the core the holoenzyme is formed, which can initiate transcription.

It localises to the plastid. It is found in the chloroplast. It catalyses the reaction RNA(n) + a ribonucleoside 5'-triphosphate = RNA(n+1) + diphosphate. Its function is as follows. DNA-dependent RNA polymerase catalyzes the transcription of DNA into RNA using the four ribonucleoside triphosphates as substrates. The polypeptide is DNA-directed RNA polymerase subunit alpha (rpoA) (Euglena viridis (Cercaria viridis)).